A 775-amino-acid chain; its full sequence is Metal transporter CNNM4 (775 aa).

Residues 1–178 (MAPVGGGGRP…LLFMVEEPGR (178 aa)) are Extracellular-facing. N-linked (GlcNAc...) asparagine glycosylation is found at Asn85 and Asn122. The 181-residue stretch at 178-358 (RFLPLWLHIL…EPYNDLVKEE (181 aa)) folds into the CNNM transmembrane domain. A helical transmembrane segment spans residues 179–199 (FLPLWLHILLITVLLVLSGIF). At 200-240 (SGLNLGLMALDPMELRIVQNCGTEKERRYARKIEPIRRKGN) the chain is on the cytoplasmic side. The helical intramembrane region spans 241 to 261 (YLLCSLLLGNVLVNTSLTILL). Residues 262–264 (DNL) are Cytoplasmic-facing. A helical membrane pass occupies residues 265-285 (IGSGLMAVASSTIGIVIFGEI). Topologically, residues 286–293 (LPQALCSR) are extracellular. The chain crosses the membrane as a helical span at residues 294–316 (HGLAVGANTILLTKFFMLLTFPL). At 317–775 (SFPISKLLDF…LHKASHENAI (459 aa)) the chain is on the cytoplasmic side. CBS domains lie at 377–438 (MTQL…CTPL) and 445–511 (YNHP…ILDE). Phosphoserine occurs at positions 660, 664, and 770.

It belongs to the ACDP family. In terms of assembly, interacts with COX11. In terms of tissue distribution, widely expressed. Highly expressed in heart.

The protein resides in the cell membrane. Its function is as follows. Probable metal transporter. The interaction with the metal ion chaperone COX11 suggests that it may play a role in sensory neuron functions. May play a role in biomineralization and retinal function. The sequence is that of Metal transporter CNNM4 (CNNM4) from Homo sapiens (Human).